A 234-amino-acid chain; its full sequence is Ubiquinone biosynthesis O-methyltransferase (234 aa).

S-adenosyl-L-methionine-binding residues include Arg36, Gly56, Asp77, and Met125.

It belongs to the methyltransferase superfamily. UbiG/COQ3 family.

The catalysed reaction is a 3-demethylubiquinol + S-adenosyl-L-methionine = a ubiquinol + S-adenosyl-L-homocysteine + H(+). It carries out the reaction a 3-(all-trans-polyprenyl)benzene-1,2-diol + S-adenosyl-L-methionine = a 2-methoxy-6-(all-trans-polyprenyl)phenol + S-adenosyl-L-homocysteine + H(+). It functions in the pathway cofactor biosynthesis; ubiquinone biosynthesis. O-methyltransferase that catalyzes the 2 O-methylation steps in the ubiquinone biosynthetic pathway. This is Ubiquinone biosynthesis O-methyltransferase from Actinobacillus pleuropneumoniae serotype 5b (strain L20).